The primary structure comprises 180 residues: Large ribosomal subunit protein uL5 (180 aa).

The protein belongs to the universal ribosomal protein uL5 family. In terms of assembly, part of the 50S ribosomal subunit; part of the 5S rRNA/L5/L18/L25 subcomplex. Contacts the 5S rRNA and the P site tRNA. Forms a bridge to the 30S subunit in the 70S ribosome.

Functionally, this is one of the proteins that bind and probably mediate the attachment of the 5S RNA into the large ribosomal subunit, where it forms part of the central protuberance. In the 70S ribosome it contacts protein S13 of the 30S subunit (bridge B1b), connecting the 2 subunits; this bridge is implicated in subunit movement. Contacts the P site tRNA; the 5S rRNA and some of its associated proteins might help stabilize positioning of ribosome-bound tRNAs. This is Large ribosomal subunit protein uL5 from Clostridium acetobutylicum (strain ATCC 824 / DSM 792 / JCM 1419 / IAM 19013 / LMG 5710 / NBRC 13948 / NRRL B-527 / VKM B-1787 / 2291 / W).